The sequence spans 1042 residues: Ubiquitin carboxyl-terminal hydrolase 38 (1042 aa).

The USP domain occupies 445 to 949 (TGLINLGNTC…TAYVLLYKKQ (505 aa)). Cysteine 454 (nucleophile) is an active-site residue. Residue histidine 857 is the Proton acceptor of the active site.

This sequence belongs to the peptidase C19 family. As to quaternary structure, interacts with isoform 1 of FBXW7; this interaction prevents FBXW7-mediated degradation of MYC. Highly expressed in skeletal muscle. Expressed in adrenal gland.

It localises to the cytoplasm. It is found in the nucleus. It catalyses the reaction Thiol-dependent hydrolysis of ester, thioester, amide, peptide and isopeptide bonds formed by the C-terminal Gly of ubiquitin (a 76-residue protein attached to proteins as an intracellular targeting signal).. In terms of biological role, deubiquitinating enzyme that plays a role in various cellular processes, including DNA repair, cell cycle regulation, and immune response. Plays a role in the inhibition of type I interferon signaling by mediating the 'Lys-33' to 'Lys-48' ubiquitination transition of TBK1 leading to its degradation. Cleaves the ubiquitin chain from the histone demethylase LSD1/KDM1A and prevents it from degradation by the 26S proteasome, thus maintaining LSD1 protein level in cells. Plays a role in the DNA damage response by regulating the deacetylase activity of HDAC1. Mechanistically, removes the 'Lys-63'-linked ubiquitin chain promoting the deacetylase activity of HDAC1 in response to DNA damage. Also acts as a specific deubiquitinase of histone deacetylase 3/HDAC3 and cleaves its 'Lys-63'-linked ubiquitin chains to lower its histone deacetylase activity. Regulates MYC levels and cell proliferation via antagonizing ubiquitin E3 ligase FBXW7 thereby preventing MYC 'Lys-48'-linked ubiquitination and degradation. Participates in antiviral response by removing both 'Lys-48'-linked and 'Lys-63'-linked polyubiquitination of Zika virus envelope protein E. Constitutively associated with IL-33R/IL1RL1, deconjugates its 'Lys-27'-linked polyubiquitination resulting in its autophagic degradation. The polypeptide is Ubiquitin carboxyl-terminal hydrolase 38 (USP38) (Homo sapiens (Human)).